We begin with the raw amino-acid sequence, 295 residues long: N-acetylmuramic acid 6-phosphate etherase (295 aa).

The SIS domain maps to 53-216; it reads TTEQFKQGGR…STITMVGVGK (164 aa). The active-site Proton donor is the Glu-81. The active site involves Glu-112.

The protein belongs to the GCKR-like family. MurNAc-6-P etherase subfamily. In terms of assembly, homodimer.

The enzyme catalyses N-acetyl-D-muramate 6-phosphate + H2O = N-acetyl-D-glucosamine 6-phosphate + (R)-lactate. The protein operates within amino-sugar metabolism; N-acetylmuramate degradation. Specifically catalyzes the cleavage of the D-lactyl ether substituent of MurNAc 6-phosphate, producing GlcNAc 6-phosphate and D-lactate. The polypeptide is N-acetylmuramic acid 6-phosphate etherase (Staphylococcus saprophyticus subsp. saprophyticus (strain ATCC 15305 / DSM 20229 / NCIMB 8711 / NCTC 7292 / S-41)).